A 156-amino-acid polypeptide reads, in one-letter code: Phosphopantetheine adenylyltransferase (156 aa).

Thr9 provides a ligand contact to substrate. ATP contacts are provided by residues 9–10 (TF) and His17. Lys41, Leu73, and Arg87 together coordinate substrate. ATP contacts are provided by residues 88–90 (GVR), Glu98, and 123–129 (WAFVSST).

It belongs to the bacterial CoaD family. Homohexamer. It depends on Mg(2+) as a cofactor.

It localises to the cytoplasm. It catalyses the reaction (R)-4'-phosphopantetheine + ATP + H(+) = 3'-dephospho-CoA + diphosphate. The protein operates within cofactor biosynthesis; coenzyme A biosynthesis; CoA from (R)-pantothenate: step 4/5. Reversibly transfers an adenylyl group from ATP to 4'-phosphopantetheine, yielding dephospho-CoA (dPCoA) and pyrophosphate. This Haemophilus influenzae (strain 86-028NP) protein is Phosphopantetheine adenylyltransferase.